Reading from the N-terminus, the 386-residue chain is Acetylornithine aminotransferase (386 aa).

Residues 94-95 (GT) and Phe121 contribute to the pyridoxal 5'-phosphate site. Residue Arg124 participates in N(2)-acetyl-L-ornithine binding. 206–209 (DEVQ) contributes to the pyridoxal 5'-phosphate binding site. Lys235 is subject to N6-(pyridoxal phosphate)lysine. Ser263 contributes to the N(2)-acetyl-L-ornithine binding site. Thr264 provides a ligand contact to pyridoxal 5'-phosphate.

Belongs to the class-III pyridoxal-phosphate-dependent aminotransferase family. ArgD subfamily. Homodimer. Pyridoxal 5'-phosphate serves as cofactor.

The protein localises to the cytoplasm. The enzyme catalyses N(2)-acetyl-L-ornithine + 2-oxoglutarate = N-acetyl-L-glutamate 5-semialdehyde + L-glutamate. It functions in the pathway amino-acid biosynthesis; L-arginine biosynthesis; N(2)-acetyl-L-ornithine from L-glutamate: step 4/4. The protein is Acetylornithine aminotransferase of Listeria monocytogenes serovar 1/2a (strain ATCC BAA-679 / EGD-e).